The chain runs to 963 residues: Protein translocase subunit SecA (963 aa).

Residues glutamine 87, glycine 105–threonine 109, and aspartate 512 each bind ATP. 2 disordered regions span residues glycine 868 to threonine 909 and glutamine 924 to serine 963. Positions proline 874–glutamate 886 are enriched in acidic residues. The Zn(2+) site is built by cysteine 949, cysteine 951, cysteine 960, and histidine 961.

This sequence belongs to the SecA family. In terms of assembly, monomer and homodimer. Part of the essential Sec protein translocation apparatus which comprises SecA, SecYEG and auxiliary proteins SecDF. Other proteins may also be involved. Zn(2+) is required as a cofactor.

Its subcellular location is the cell inner membrane. It localises to the cytoplasm. It carries out the reaction ATP + H2O + cellular proteinSide 1 = ADP + phosphate + cellular proteinSide 2.. In terms of biological role, part of the Sec protein translocase complex. Interacts with the SecYEG preprotein conducting channel. Has a central role in coupling the hydrolysis of ATP to the transfer of proteins into and across the cell membrane, serving as an ATP-driven molecular motor driving the stepwise translocation of polypeptide chains across the membrane. In Solibacter usitatus (strain Ellin6076), this protein is Protein translocase subunit SecA.